An 87-amino-acid polypeptide reads, in one-letter code: Phospholemman (87 aa).

The signal sequence occupies residues 1–20 (MASLSHILVLWVGILTVVNA). Residues 21 to 35 (EAPQEHDPFTYDYQS) lie on the Extracellular side of the membrane. Residues 36–56 (LRIGGLIIAGILFILGILIVL) traverse the membrane as a helical segment. Residues 57–87 (SRRCRCKFNQQQSLGKMRSPHLAAQFSSESC) lie on the Cytoplasmic side of the membrane. Residue C60 is the site of S-palmitoyl cysteine attachment. Position 62 is an S-glutathionyl cysteine; alternate (C62). Residue C62 is the site of S-palmitoyl cysteine; alternate attachment. The residue at position 75 (S75) is a Phosphoserine; by PKA and PKC. A Phosphoserine; by PKA modification is found at S83.

This sequence belongs to the FXYD family. As to quaternary structure, homotetramer. Monomer. Regulatory subunit of the sodium/potassium-transporting ATPase (NKA) which is composed of a catalytic alpha subunit, a non-catalytic beta subunit and an additional regulatory subunit. The monomeric form associates with NKA while the oligomeric form does not. Interacts with the catalytic alpha-1 subunit ATP1A1. Also interacts with the catalytic alpha-2 and alpha-3 subunits ATP1A2 and ATP1A3. Very little interaction with ATP1A1, ATP1A2 or ATP1A3 when phosphorylated at Ser-83. Interacts with the non-catalytic beta-1 subunit ATP1B1. Oxidative stress decreases interaction with ATP1A1 but increases interaction with ATP1B1. Post-translationally, major plasma membrane substrate for cAMP-dependent protein kinase (PKA) and protein kinase C (PKC) in several different tissues. Phosphorylated in response to insulin and adrenergic stimulation. Phosphorylation at Ser-83 stimulates sodium/potassium-transporting ATPase activity while the unphosphorylated form inhibits sodium/potassium-transporting ATPase activity. Phosphorylation increases tetramerization, decreases binding to ATP1A1 and reduces inhibition of ATP1A1 activity. Phosphorylation at Ser-75 leads to greatly reduced interaction with ATP1A1, ATP1A2 and ATP1A3. May be phosphorylated by DMPK. Palmitoylation increases half-life and stability and is enhanced upon phosphorylation at Ser-83 by PKA.

The protein resides in the cell membrane. Its subcellular location is the sarcolemma. It localises to the apical cell membrane. The protein localises to the membrane. It is found in the caveola. The protein resides in the T-tubule. Its function is as follows. Associates with and regulates the activity of the sodium/potassium-transporting ATPase (NKA) which transports Na(+) out of the cell and K(+) into the cell. Inhibits NKA activity in its unphosphorylated state and stimulates activity when phosphorylated. Reduces glutathionylation of the NKA beta-1 subunit ATP1B1, thus reversing glutathionylation-mediated inhibition of ATP1B1. Contributes to female sexual development by maintaining the excitability of neurons which secrete gonadotropin-releasing hormone. The protein is Phospholemman of Sus scrofa (Pig).